Reading from the N-terminus, the 406-residue chain is Tyrosine--tRNA ligase (406 aa).

Residue Y35 participates in L-tyrosine binding. The short motif at 40–49 (PTADSLHVGH) is the 'HIGH' region element. 2 residues coordinate L-tyrosine: Y168 and Q172. The 'KMSKS' region signature appears at 228–232 (KMGKT). K231 lines the ATP pocket. Positions 340–405 (STVLDVIAKV…GKKNYNKIEI (66 aa)) constitute an S4 RNA-binding domain.

Belongs to the class-I aminoacyl-tRNA synthetase family. TyrS type 1 subfamily. As to quaternary structure, homodimer.

It is found in the cytoplasm. It carries out the reaction tRNA(Tyr) + L-tyrosine + ATP = L-tyrosyl-tRNA(Tyr) + AMP + diphosphate + H(+). Functionally, catalyzes the attachment of tyrosine to tRNA(Tyr) in a two-step reaction: tyrosine is first activated by ATP to form Tyr-AMP and then transferred to the acceptor end of tRNA(Tyr). This is Tyrosine--tRNA ligase from Clostridium botulinum (strain Eklund 17B / Type B).